The primary structure comprises 469 residues: Adenosylhomocysteinase (469 aa).

Residues Thr63, Asp139, and Glu164 each contribute to the substrate site. NAD(+) is bound at residue 165 to 167 (TTT). Residues Lys194 and Asp198 each contribute to the substrate site. NAD(+) is bound by residues Asn199, 228–233 (GYGDVG), Glu251, Asn300, 321–323 (IGH), and Asn375.

It belongs to the adenosylhomocysteinase family. NAD(+) is required as a cofactor.

Its subcellular location is the cytoplasm. It carries out the reaction S-adenosyl-L-homocysteine + H2O = L-homocysteine + adenosine. It functions in the pathway amino-acid biosynthesis; L-homocysteine biosynthesis; L-homocysteine from S-adenosyl-L-homocysteine: step 1/1. Functionally, may play a key role in the regulation of the intracellular concentration of adenosylhomocysteine. This Pseudomonas syringae pv. syringae (strain B728a) protein is Adenosylhomocysteinase.